Consider the following 80-residue polypeptide: Exodeoxyribonuclease 7 small subunit (80 aa).

Belongs to the XseB family. In terms of assembly, heterooligomer composed of large and small subunits.

Its subcellular location is the cytoplasm. It carries out the reaction Exonucleolytic cleavage in either 5'- to 3'- or 3'- to 5'-direction to yield nucleoside 5'-phosphates.. In terms of biological role, bidirectionally degrades single-stranded DNA into large acid-insoluble oligonucleotides, which are then degraded further into small acid-soluble oligonucleotides. The protein is Exodeoxyribonuclease 7 small subunit of Aliivibrio salmonicida (strain LFI1238) (Vibrio salmonicida (strain LFI1238)).